The sequence spans 456 residues: MLNNAMSVVILAAGKGTRMYSDLPKVLHTLAGKAMVQHVIDAANELGAAHVHLVYGHGGDLLKQALKDDNLNWVLQAEQLGTGHAMQQAAPFFADDEDILMLYGDVPLISVETLQRLRDAKPQGGIGLLTVKLDDPTGYGRITRENGKVTGIVEHKDATDEQRQIQEINTGILIANGADMKRWLAKLTNNNAQGEYYITDIIALAYQEGREIVAVHPQRLSEVEGVNNRLQLSRLERVYQSEQAEKLLLAGVMLRDPARFDLRGTLTHGRDVEIDTNVIIEGNVTLGHRVKIGTGCVIKNSVIGDDCEISPYTVVEDANLAAACTIGPFARLRPGAELLEGAHVGNFVEMKKARLGKGTKAGHLTYLGDAEIGDNVNIGAGTITCNYDGANKFKTIIGDDVFVGSDTQLVAPVTVGKGATIAAGTTVTRNVGENALAISRVPQTQKEGWRRPVKKK.

A pyrophosphorylase region spans residues 1–229 (MLNNAMSVVI…LSEVEGVNNR (229 aa)). UDP-N-acetyl-alpha-D-glucosamine-binding positions include 11–14 (LAAG), K25, Q76, 81–82 (GT), 103–105 (YGD), G140, E154, N169, and N227. D105 contacts Mg(2+). N227 provides a ligand contact to Mg(2+). The interval 230–250 (LQLSRLERVYQSEQAEKLLLA) is linker. Residues 251–456 (GVMLRDPARF…EGWRRPVKKK (206 aa)) form an N-acetyltransferase region. Positions 333 and 351 each coordinate UDP-N-acetyl-alpha-D-glucosamine. H363 functions as the Proton acceptor in the catalytic mechanism. UDP-N-acetyl-alpha-D-glucosamine is bound by residues Y366 and N377. Residues A380, 386–387 (NY), S405, A423, and R440 each bind acetyl-CoA.

In the N-terminal section; belongs to the N-acetylglucosamine-1-phosphate uridyltransferase family. This sequence in the C-terminal section; belongs to the transferase hexapeptide repeat family. Homotrimer. Mg(2+) serves as cofactor.

The protein localises to the cytoplasm. The enzyme catalyses alpha-D-glucosamine 1-phosphate + acetyl-CoA = N-acetyl-alpha-D-glucosamine 1-phosphate + CoA + H(+). It catalyses the reaction N-acetyl-alpha-D-glucosamine 1-phosphate + UTP + H(+) = UDP-N-acetyl-alpha-D-glucosamine + diphosphate. Its pathway is nucleotide-sugar biosynthesis; UDP-N-acetyl-alpha-D-glucosamine biosynthesis; N-acetyl-alpha-D-glucosamine 1-phosphate from alpha-D-glucosamine 6-phosphate (route II): step 2/2. It participates in nucleotide-sugar biosynthesis; UDP-N-acetyl-alpha-D-glucosamine biosynthesis; UDP-N-acetyl-alpha-D-glucosamine from N-acetyl-alpha-D-glucosamine 1-phosphate: step 1/1. The protein operates within bacterial outer membrane biogenesis; LPS lipid A biosynthesis. Its function is as follows. Catalyzes the last two sequential reactions in the de novo biosynthetic pathway for UDP-N-acetylglucosamine (UDP-GlcNAc). The C-terminal domain catalyzes the transfer of acetyl group from acetyl coenzyme A to glucosamine-1-phosphate (GlcN-1-P) to produce N-acetylglucosamine-1-phosphate (GlcNAc-1-P), which is converted into UDP-GlcNAc by the transfer of uridine 5-monophosphate (from uridine 5-triphosphate), a reaction catalyzed by the N-terminal domain. This chain is Bifunctional protein GlmU, found in Shigella flexneri serotype 5b (strain 8401).